The following is an 82-amino-acid chain: Protein Rv1078A (82 aa).

The span at 35–54 (GGPTRRLRRRPAVTRRRRPD) shows a compositional bias: basic residues. A disordered region spans residues 35–82 (GGPTRRLRRRPAVTRRRRPDRRFVRCRPSPTRRGLPGCWRHSSTGPHT).

It localises to the cytoplasm. This chain is Protein Rv1078A, found in Mycobacterium tuberculosis (strain ATCC 25618 / H37Rv).